The following is a 428-amino-acid chain: MAKEKPILNVAFIGHVDAGKSTTVGRLLLDGGAIDPQLIVRLRKEAEEKGKAGFEFAYVMDGLKEERERGVTIDVAHKKFPTAKYEVTIVDCPGHRDFIKNMITGASQADAAILVVNVDDAKSGIQPQTREHVFLSRTLGISQLAVAINKMDTVNFSEADYNEMKKMLGDQLLKMVGFNPANITFVPVASLHGDNVFKKSDRTPWYNGPTLAEVIDAFQPPEKPTTLPLRLPIQDVYSITGVGTVPVGRVETGIIKPGDKVIFEPAGAVGEIKTVEMHHEQLPSAEPGDNIGFNVRGVGKKDIKRGDVLGHTTNPPTVAADFTAQIVVLQHPSVMTVGYTPVFHAHTAQIACTFMELQKKLNPATGEVLEENPDFLKAGDAAIVKLMPTKPLVMESVKEIPQLGRFAIRDMGMTVAAGMAIQVTAKNK.

The tr-type G domain maps to K5 to T225. Residues G14 to S21 form a G1 region. Residue G14–S21 participates in GTP binding. S21 is a Mg(2+) binding site. The G2 stretch occupies residues G70–D74. A G3 region spans residues D91–G94. GTP is bound by residues D91–H95 and N149–D152. The segment at N149–D152 is G4. The G5 stretch occupies residues A189–L191.

The protein belongs to the TRAFAC class translation factor GTPase superfamily. Classic translation factor GTPase family. EF-Tu/EF-1A subfamily.

It localises to the cytoplasm. It carries out the reaction GTP + H2O = GDP + phosphate + H(+). In terms of biological role, GTP hydrolase that promotes the GTP-dependent binding of aminoacyl-tRNA to the A-site of ribosomes during protein biosynthesis. In Methanococcus maripaludis (strain C6 / ATCC BAA-1332), this protein is Elongation factor 1-alpha.